Consider the following 1169-residue polypeptide: Chromosome partition protein Smc (1169 aa).

ATP is bound at residue 32–39; that stretch reads PNGCGKSN. Coiled-coil stretches lie at residues 170 to 265 and 307 to 481; these read ISKY…TGEE and IRHT…ERLN. One can recognise an SMC hinge domain in the interval 525-620; that stretch reads DRLGEKIEVA…CASDPAEAAE (96 aa). Coiled coils occupy residues 656–914 and 985–1014; these read ALAR…MKLA and RYLEEQDRDLTESLATLEQAIEKIDRECRA.

This sequence belongs to the SMC family. In terms of assembly, homodimer.

It is found in the cytoplasm. In terms of biological role, required for chromosome condensation and partitioning. The sequence is that of Chromosome partition protein Smc from Methylococcus capsulatus (strain ATCC 33009 / NCIMB 11132 / Bath).